Reading from the N-terminus, the 934-residue chain is MPKCDVKTRYIPATFAWIVLLLTTFLFFFYPCQFYVKSHPWVLAYQGVITFFVLANFTLATFMDPGIIPKASPDEDCEEELRAPLYKNAEINGITVKMKWCVTCKFYRPPRCSHCSVCNHCIETFDHHCPWVNNCIGRRNYRFFFFFLVSLSIHMLSIFSLCLVYVLKIMPNIKDTAPIVAIILMGLVTILAIPIFGLTGFHMVLVSRGRTTNEQVTGKFKGGYNPFSRGCWHNCCYTQFGPQYPSLLNPKKYASRRSQVQNQAISTICNDRSGQQTGAGSGAGGNGTAAVSGGGGGVGSGGGMRGTAVQYSPRSFYDASREKRGIQVKTYMAEGNGYNQRSGSTTLYSKLSPGRECSDTDLEPPPASQSQDCEPTPPLQRHNSSSFYLPQVSDSGGLNGSVSTGGGGGGDSPRHMRLYHPRHSPHARPRGLDPQRGYTSDALSPDHPVGYGVGVNGSQQQQQQALAAAAAAAAVAAQNQRSATTTATPTMQQRIKPLGVATPLVMASPVRRSNPGTPTQPRRPDFIGLNAQAVAQQQQQQQQAAAAAAAAYYEYTSGLPPQHPQAPSIQQQQQQLLLQQQRVLMQHQQQQQALQQQQQQQQQAAVHAAHPQHAALAQAAYGGSPQRRFLSEGELVRQGAGGGVAGGELSYARSNNTVDNIRELAGSPQRGVYMWKDTSPGFTNNAGQQQQQQQQAQQVVSSGIGSSAGTLSSSGAAAGVMPHAQYMTAGGGAHPLIMTHSRLQDYTIQQQQQQQQQQAAAAAAASYHRSNPTSPTTMPQVSGAGQSYILRYGGGGAVGAAGSSGSLASVTASNPATGGGGYQPALRGGVAVFPPNPMGNQGGGNLQTQPSPQIKRKQTPTRPMSFVRALEMADSMEMQSLEQQQNGGIPGSGSVGNNQQAGGGGGGHLMQSNASNSGTPDRASIYDMNYEISV.

The Cytoplasmic segment spans residues 1–9 (MPKCDVKTR). A helical membrane pass occupies residues 10–30 (YIPATFAWIVLLLTTFLFFFY). Residues 31–47 (PCQFYVKSHPWVLAYQG) are Extracellular-facing. The chain crosses the membrane as a helical span at residues 48 to 68 (VITFFVLANFTLATFMDPGII). Residues 69-142 (PKASPDEDCE…NNCIGRRNYR (74 aa)) lie on the Cytoplasmic side of the membrane. The DHHC domain maps to 99–149 (KWCVTCKFYRPPRCSHCSVCNHCIETFDHHCPWVNNCIGRRNYRFFFFFLV). Cys129 serves as the catalytic S-palmitoyl cysteine intermediate. A helical transmembrane segment spans residues 143–163 (FFFFFLVSLSIHMLSIFSLCL). The Extracellular segment spans residues 164–177 (VYVLKIMPNIKDTA). A helical transmembrane segment spans residues 178–198 (PIVAIILMGLVTILAIPIFGL). The Cytoplasmic segment spans residues 199-934 (TGFHMVLVSR…IYDMNYEISV (736 aa)). Disordered stretches follow at residues 336 to 440 (NGYN…GYTS), 506 to 525 (MASPVRRSNPGTPTQPRRPD), 669 to 705 (QRGVYMWKDTSPGFTNNAGQQQQQQQQAQQVVSSGIG), 751 to 780 (QQQQQQQQAAAAAAASYHRSNPTSPTTMPQ), 835 to 862 (PNPMGNQGGGNLQTQPSPQIKRKQTPTR), and 881 to 934 (LEQQ…EISV). 2 stretches are compositionally biased toward polar residues: residues 337-349 (GYNQRSGSTTLYS) and 381-394 (RHNSSSFYLPQVSD). Gly residues predominate over residues 397–411 (GLNGSVSTGGGGGGD). Basic residues predominate over residues 415-429 (HMRLYHPRHSPHARP). Low complexity-rich tracts occupy residues 688 to 705 (QQQQQQQQAQQVVSSGIG) and 751 to 765 (QQQQQQQQAAAAAAA). Over residues 768-780 (HRSNPTSPTTMPQ) the composition is skewed to polar residues. Residues 910–919 (MQSNASNSGT) are compositionally biased toward polar residues.

Belongs to the DHHC palmitoyltransferase family. ERF2/ZDHHC9 subfamily.

It is found in the golgi apparatus membrane. The protein localises to the cell membrane. It carries out the reaction L-cysteinyl-[protein] + hexadecanoyl-CoA = S-hexadecanoyl-L-cysteinyl-[protein] + CoA. Functionally, palmitoyltransferase that catalyzes the addition of palmitate onto various protein substrates and therefore functions in several unrelated biological processes. Regulates tissue growth possibly by regulating Ras64B protein stability. May regulate CG34450 mRNA levels. This chain is Palmitoyltransferase ZDHHC8, found in Drosophila melanogaster (Fruit fly).